Here is a 216-residue protein sequence, read N- to C-terminus: MTDKRVTAILFDLDGTLIDTNELIIASYLHTLDHYCPGQFKREDVLPFIGPPLYETFSGINAEKCDEMISMYRAFNHEKHDELVTEYETVYETLDELKKAGYQLGIVTTKLRDTVNMGLKLTGIGAFFDTVVTLDDVKHPKPDPEPVRLALSRLGCDPSEAIMVGDNYHDVMAGKNAGTKTAGVAWTIKGAQTLSAYEPDYMLEKMSDLLHITGVK.

The Nucleophile role is filled by Asp12.

The protein belongs to the HAD-like hydrolase superfamily. PpaX family. Mg(2+) is required as a cofactor.

It catalyses the reaction diphosphate + H2O = 2 phosphate + H(+). Its function is as follows. Hydrolyzes pyrophosphate formed during P-Ser-HPr dephosphorylation by HPrK/P. Might play a role in controlling the intracellular pyrophosphate pool. The sequence is that of Pyrophosphatase PpaX from Bacillus velezensis (strain DSM 23117 / BGSC 10A6 / LMG 26770 / FZB42) (Bacillus amyloliquefaciens subsp. plantarum).